The sequence spans 1377 residues: DNA-directed RNA polymerase subunit beta' (1377 aa).

Positions 70, 72, 85, and 88 each coordinate Zn(2+). Mg(2+)-binding residues include Asp460, Asp462, and Asp464. Zn(2+) is bound by residues Cys808, Cys882, Cys889, and Cys892.

The protein belongs to the RNA polymerase beta' chain family. In terms of assembly, the RNAP catalytic core consists of 2 alpha, 1 beta, 1 beta' and 1 omega subunit. When a sigma factor is associated with the core the holoenzyme is formed, which can initiate transcription. Mg(2+) serves as cofactor. It depends on Zn(2+) as a cofactor.

It carries out the reaction RNA(n) + a ribonucleoside 5'-triphosphate = RNA(n+1) + diphosphate. DNA-dependent RNA polymerase catalyzes the transcription of DNA into RNA using the four ribonucleoside triphosphates as substrates. This Geotalea uraniireducens (strain Rf4) (Geobacter uraniireducens) protein is DNA-directed RNA polymerase subunit beta'.